The following is a 383-amino-acid chain: uncharacterized protein (383 aa).

Belongs to the peptidase M20 family.

This is an uncharacterized protein from Staphylococcus aureus (strain USA300).